Here is a 65-residue protein sequence, read N- to C-terminus: Large ribosomal subunit protein bL35 (65 aa).

The protein belongs to the bacterial ribosomal protein bL35 family.

The polypeptide is Large ribosomal subunit protein bL35 (Phytoplasma australiense).